The sequence spans 347 residues: GMP reductase (347 aa).

Asn108–Ala131 contributes to the NADP(+) binding site. Gly181 and Gly183 together coordinate K(+). Cys186 (thioimidate intermediate) is an active-site residue. Residue Ile216 to Val239 coordinates NADP(+).

Belongs to the IMPDH/GMPR family. GuaC type 1 subfamily. In terms of assembly, homotetramer.

It carries out the reaction IMP + NH4(+) + NADP(+) = GMP + NADPH + 2 H(+). Catalyzes the irreversible NADPH-dependent deamination of GMP to IMP. It functions in the conversion of nucleobase, nucleoside and nucleotide derivatives of G to A nucleotides, and in maintaining the intracellular balance of A and G nucleotides. The polypeptide is GMP reductase (Tolumonas auensis (strain DSM 9187 / NBRC 110442 / TA 4)).